Here is a 447-residue protein sequence, read N- to C-terminus: UPF0210 protein Ldb1026 (447 aa).

The protein belongs to the UPF0210 family. Homodimer.

The protein is UPF0210 protein Ldb1026 of Lactobacillus delbrueckii subsp. bulgaricus (strain ATCC 11842 / DSM 20081 / BCRC 10696 / JCM 1002 / NBRC 13953 / NCIMB 11778 / NCTC 12712 / WDCM 00102 / Lb 14).